A 380-amino-acid polypeptide reads, in one-letter code: Carbamoyl phosphate synthase small chain (380 aa).

The segment at 1–187 (MTTSTRGAAK…VVPAIGAKRF (187 aa)) is CPSase. Residues serine 55, glycine 236, and glycine 238 each coordinate L-glutamine. Positions 188 to 380 (TVAAVDLGIK…FVSLMEGQRA (193 aa)) constitute a Glutamine amidotransferase type-1 domain. The Nucleophile role is filled by cysteine 264. Phenylalanine 265, glutamine 268, asparagine 306, glycine 308, and phenylalanine 309 together coordinate L-glutamine. Active-site residues include histidine 354 and glutamate 356.

Belongs to the CarA family. Composed of two chains; the small (or glutamine) chain promotes the hydrolysis of glutamine to ammonia, which is used by the large (or ammonia) chain to synthesize carbamoyl phosphate. Tetramer of heterodimers (alpha,beta)4.

It carries out the reaction hydrogencarbonate + L-glutamine + 2 ATP + H2O = carbamoyl phosphate + L-glutamate + 2 ADP + phosphate + 2 H(+). The catalysed reaction is L-glutamine + H2O = L-glutamate + NH4(+). It functions in the pathway amino-acid biosynthesis; L-arginine biosynthesis; carbamoyl phosphate from bicarbonate: step 1/1. Its pathway is pyrimidine metabolism; UMP biosynthesis via de novo pathway; (S)-dihydroorotate from bicarbonate: step 1/3. Functionally, small subunit of the glutamine-dependent carbamoyl phosphate synthetase (CPSase). CPSase catalyzes the formation of carbamoyl phosphate from the ammonia moiety of glutamine, carbonate, and phosphate donated by ATP, constituting the first step of 2 biosynthetic pathways, one leading to arginine and/or urea and the other to pyrimidine nucleotides. The small subunit (glutamine amidotransferase) binds and cleaves glutamine to supply the large subunit with the substrate ammonia. The polypeptide is Carbamoyl phosphate synthase small chain (Streptomyces avermitilis (strain ATCC 31267 / DSM 46492 / JCM 5070 / NBRC 14893 / NCIMB 12804 / NRRL 8165 / MA-4680)).